The primary structure comprises 244 residues: Ferric aerobactin reductase IutB (244 aa).

[2Fe-2S] cluster is bound by residues Cys-220, Cys-221, Cys-232, and Cys-235.

As to quaternary structure, monomer. [2Fe-2S] cluster is required as a cofactor.

It is found in the cytoplasm. It carries out the reaction 2 a Fe(II)-siderophore + NAD(+) + H(+) = 2 a Fe(III)-siderophore + NADH. The catalysed reaction is 2 a Fe(II)-siderophore + NADP(+) + H(+) = 2 a Fe(III)-siderophore + NADPH. In terms of biological role, ferric-siderophore reductase involved in iron removal from the siderophores after their transport into the cell. Acts as a major ferric-aerobactin reductase catalyzing the reduction of Fe(3+)-aerobactin, a citrate-hydroxamate siderophore produced by other bacteria. Catalyzes reduction of Fe(3+)-vulnibactin, a catecholate siderophore synthesized by V.vulnificus, in the absence of VuuB. Catalyzes reduction of ferrioxamine B and Fe(3+)-vibriobactin in vitro. No activity with Fe(3+)-enterobactin. Catalyzes reduction of ferric chelating compound Fe(3+)-nitrilotriacetic acid (NTA) in the presence of NADH, NADPH or reduced glutathione (GSH) as its electron donor in vitro. Also catalyzes reduction of ferric chelating compounds Fe(3+)-citrate and Fe(3+)-EDTA as well as non-complexed FeCl3 in the presence of GSH as its electron donor in vitro. Highest activity with Fe(3+)-NTA as electron acceptor and GSH as donor. In Vibrio vulnificus, this protein is Ferric aerobactin reductase IutB.